We begin with the raw amino-acid sequence, 280 residues long: UDP-2,3-diacylglucosamine pyrophosphatase LpxI (280 aa).

Substrate-binding positions include Ala-12, 74–75, Gln-169, 187–188, Lys-214, and 226–233; these read NV, TD, and LPTIGVAT.

This sequence belongs to the LpxI family. In terms of assembly, homodimer. Requires Mg(2+) as cofactor.

Its subcellular location is the cell inner membrane. It carries out the reaction UDP-2-N,3-O-bis[(3R)-3-hydroxytetradecanoyl]-alpha-D-glucosamine + H2O = 2-N,3-O-bis[(3R)-3-hydroxytetradecanoyl]-alpha-D-glucosaminyl 1-phosphate + UMP + 2 H(+). The protein operates within glycolipid biosynthesis; lipid IV(A) biosynthesis; lipid IV(A) from (3R)-3-hydroxytetradecanoyl-[acyl-carrier-protein] and UDP-N-acetyl-alpha-D-glucosamine: step 4/6. With respect to regulation, inhibited by high concentrations of Cu(2+) and Zn(2+). Completely inhibited by EDTA in vitro. Its function is as follows. Hydrolyzes the pyrophosphate bond of UDP-2,3-diacylglucosamine to form 2,3-diacylglucosamine 1-phosphate (lipid X) and UMP by catalyzing the attack of water at the beta-P atom. Involved in the biosynthesis of lipid A, a phosphorylated glycolipid that anchors the lipopolysaccharide to the outer membrane of the cell. Can functionally complement lpxH deficiency in E.coli. Cannot use CDP-diacylglycerol as substrate. The sequence is that of UDP-2,3-diacylglucosamine pyrophosphatase LpxI from Caulobacter vibrioides (strain ATCC 19089 / CIP 103742 / CB 15) (Caulobacter crescentus).